Reading from the N-terminus, the 287-residue chain is Large ribosomal subunit protein uL2 (287 aa).

A disordered region spans residues 221 to 287 (RGSVMNPCDH…SKRSRGGRDS (67 aa)). Over residues 258–287 (KTRKKNKPSNKLVVRRRRRISKRSRGGRDS) the composition is skewed to basic residues.

Belongs to the universal ribosomal protein uL2 family. As to quaternary structure, part of the 50S ribosomal subunit. Forms a bridge to the 30S subunit in the 70S ribosome.

Its function is as follows. One of the primary rRNA binding proteins. Required for association of the 30S and 50S subunits to form the 70S ribosome, for tRNA binding and peptide bond formation. It has been suggested to have peptidyltransferase activity; this is somewhat controversial. Makes several contacts with the 16S rRNA in the 70S ribosome. The sequence is that of Large ribosomal subunit protein uL2 from Prochlorococcus marinus (strain MIT 9312).